Reading from the N-terminus, the 450-residue chain is UDP-N-acetylmuramoylalanine--D-glutamate ligase (450 aa).

112-118 (GSNGKTT) contacts ATP.

It belongs to the MurCDEF family.

The protein resides in the cytoplasm. The catalysed reaction is UDP-N-acetyl-alpha-D-muramoyl-L-alanine + D-glutamate + ATP = UDP-N-acetyl-alpha-D-muramoyl-L-alanyl-D-glutamate + ADP + phosphate + H(+). It functions in the pathway cell wall biogenesis; peptidoglycan biosynthesis. Its function is as follows. Cell wall formation. Catalyzes the addition of glutamate to the nucleotide precursor UDP-N-acetylmuramoyl-L-alanine (UMA). The polypeptide is UDP-N-acetylmuramoylalanine--D-glutamate ligase (Cytophaga hutchinsonii (strain ATCC 33406 / DSM 1761 / CIP 103989 / NBRC 15051 / NCIMB 9469 / D465)).